We begin with the raw amino-acid sequence, 72 residues long: Large ribosomal subunit protein bL28 (72 aa).

This sequence belongs to the bacterial ribosomal protein bL28 family.

This is Large ribosomal subunit protein bL28 from Chlorobaculum parvum (strain DSM 263 / NCIMB 8327) (Chlorobium vibrioforme subsp. thiosulfatophilum).